The following is a 602-amino-acid chain: UvrABC system protein C (602 aa).

A GIY-YIG domain is found at 17 to 94; it reads TTSGCYKMYS…IKEHKPDYNI (78 aa). In terms of domain architecture, UVR spans 199–234; that stretch reads SKLLDEIEIKMKEVIKREDFESAIKLKETKRSLIEI.

The protein belongs to the UvrC family. Interacts with UvrB in an incision complex.

It localises to the cytoplasm. Its function is as follows. The UvrABC repair system catalyzes the recognition and processing of DNA lesions. UvrC both incises the 5' and 3' sides of the lesion. The N-terminal half is responsible for the 3' incision and the C-terminal half is responsible for the 5' incision. The chain is UvrABC system protein C from Borrelia turicatae (strain 91E135).